Here is a 395-residue protein sequence, read N- to C-terminus: Flap endonuclease 1 (395 aa).

The segment at 1 to 104 (MGIKHLYQII…GELAKRFMRK (104 aa)) is N-domain. D34 lines the Mg(2+) pocket. 2 residues coordinate DNA: R47 and R70. Mg(2+)-binding residues include D86, E158, E160, D179, and D181. Residues 122–253 (EVEKFSRRTV…NTALKLIRDH (132 aa)) are I-domain. Residue E158 coordinates DNA. The DNA site is built by G231 and D233. Position 233 (D233) interacts with Mg(2+). Residues 341–349 (QQSRLEGFF) form an interaction with PCNA region. Residues 360-389 (AVLKRKHEEKLELQKKKKKEDSKAKKEAKS) are compositionally biased toward basic and acidic residues. Positions 360 to 395 (AVLKRKHEEKLELQKKKKKEDSKAKKEAKSKPRGTT) are disordered.

The protein belongs to the XPG/RAD2 endonuclease family. FEN1 subfamily. In terms of assembly, interacts with PCNA. Three molecules of FEN1 bind to one PCNA trimer with each molecule binding to one PCNA monomer. PCNA stimulates the nuclease activity without altering cleavage specificity. Mg(2+) is required as a cofactor. Post-translationally, phosphorylated. Phosphorylation upon DNA damage induces relocalization to the nuclear plasma.

Its subcellular location is the nucleus. It localises to the nucleolus. The protein localises to the nucleoplasm. The protein resides in the mitochondrion. Structure-specific nuclease with 5'-flap endonuclease and 5'-3' exonuclease activities involved in DNA replication and repair. During DNA replication, cleaves the 5'-overhanging flap structure that is generated by displacement synthesis when DNA polymerase encounters the 5'-end of a downstream Okazaki fragment. It enters the flap from the 5'-end and then tracks to cleave the flap base, leaving a nick for ligation. Also involved in the long patch base excision repair (LP-BER) pathway, by cleaving within the apurinic/apyrimidinic (AP) site-terminated flap. Acts as a genome stabilization factor that prevents flaps from equilibrating into structures that lead to duplications and deletions. Also possesses 5'-3' exonuclease activity on nicked or gapped double-stranded DNA, and exhibits RNase H activity. Also involved in replication and repair of rDNA and in repairing mitochondrial DNA. This Ajellomyces capsulatus (strain H143) (Darling's disease fungus) protein is Flap endonuclease 1.